The sequence spans 228 residues: Ribosomal RNA small subunit methyltransferase G (228 aa).

S-adenosyl-L-methionine contacts are provided by residues Gly89, Leu94, 140–141 (VE), and Arg159.

This sequence belongs to the methyltransferase superfamily. RNA methyltransferase RsmG family.

The protein resides in the cytoplasm. The catalysed reaction is guanosine(527) in 16S rRNA + S-adenosyl-L-methionine = N(7)-methylguanosine(527) in 16S rRNA + S-adenosyl-L-homocysteine. Its function is as follows. Specifically methylates the N7 position of guanine in position 527 of 16S rRNA. The protein is Ribosomal RNA small subunit methyltransferase G of Burkholderia vietnamiensis (strain G4 / LMG 22486) (Burkholderia cepacia (strain R1808)).